A 193-amino-acid chain; its full sequence is dTTP/UTP pyrophosphatase (193 aa).

The active-site Proton acceptor is Asp73.

This sequence belongs to the Maf family. YhdE subfamily. A divalent metal cation serves as cofactor.

Its subcellular location is the cytoplasm. It catalyses the reaction dTTP + H2O = dTMP + diphosphate + H(+). The catalysed reaction is UTP + H2O = UMP + diphosphate + H(+). Functionally, nucleoside triphosphate pyrophosphatase that hydrolyzes dTTP and UTP. May have a dual role in cell division arrest and in preventing the incorporation of modified nucleotides into cellular nucleic acids. This is dTTP/UTP pyrophosphatase from Caulobacter vibrioides (strain ATCC 19089 / CIP 103742 / CB 15) (Caulobacter crescentus).